A 495-amino-acid chain; its full sequence is Glutamate--tRNA ligase (495 aa).

Positions 13–23 (PSPTGTPHVGL) match the 'HIGH' region motif. The 'KMSKS' region motif lies at 257–261 (KLSKR). Lys260 lines the ATP pocket.

This sequence belongs to the class-I aminoacyl-tRNA synthetase family. Glutamate--tRNA ligase type 1 subfamily. Monomer.

The protein localises to the cytoplasm. The enzyme catalyses tRNA(Glu) + L-glutamate + ATP = L-glutamyl-tRNA(Glu) + AMP + diphosphate. Functionally, catalyzes the attachment of glutamate to tRNA(Glu) in a two-step reaction: glutamate is first activated by ATP to form Glu-AMP and then transferred to the acceptor end of tRNA(Glu). In Mycolicibacterium vanbaalenii (strain DSM 7251 / JCM 13017 / BCRC 16820 / KCTC 9966 / NRRL B-24157 / PYR-1) (Mycobacterium vanbaalenii), this protein is Glutamate--tRNA ligase.